Consider the following 553-residue polypeptide: Formate--tetrahydrofolate ligase (553 aa).

62–69 is an ATP binding site; it reads TPAGEGKS.

It belongs to the formate--tetrahydrofolate ligase family.

It carries out the reaction (6S)-5,6,7,8-tetrahydrofolate + formate + ATP = (6R)-10-formyltetrahydrofolate + ADP + phosphate. Its pathway is one-carbon metabolism; tetrahydrofolate interconversion. This chain is Formate--tetrahydrofolate ligase, found in Pediococcus pentosaceus (strain ATCC 25745 / CCUG 21536 / LMG 10740 / 183-1w).